We begin with the raw amino-acid sequence, 125 residues long: Large ribosomal subunit protein bL17 (125 aa).

Belongs to the bacterial ribosomal protein bL17 family. As to quaternary structure, part of the 50S ribosomal subunit. Contacts protein L32.

This is Large ribosomal subunit protein bL17 from Blochmanniella floridana.